Consider the following 210-residue polypeptide: Putative polysaccharide-binding protein (210 aa).

A signal peptide spans 1-22 (MGFLKGTAAALTLLSAAAAASA). CBM1 domains lie at 23–62 (CGVL…AMPG), 63–105 (MMGQ…LANK), 125–165 (CGKE…APPP), and 166–210 (KMGE…PMHP).

In Porphyra purpurea (Red seaweed), this protein is Putative polysaccharide-binding protein.